Consider the following 217-residue polypeptide: LexA repressor (217 aa).

Positions 26–46 (FEEMKLALDLKSKSGIHRLIK) form a DNA-binding region, H-T-H motif. Active-site for autocatalytic cleavage activity residues include Ser-138 and Lys-176.

Belongs to the peptidase S24 family. In terms of assembly, homodimer.

It carries out the reaction Hydrolysis of Ala-|-Gly bond in repressor LexA.. In terms of biological role, represses a number of genes involved in the response to DNA damage (SOS response), including recA and lexA. In the presence of single-stranded DNA, RecA interacts with LexA causing an autocatalytic cleavage which disrupts the DNA-binding part of LexA, leading to derepression of the SOS regulon and eventually DNA repair. The protein is LexA repressor of Zymomonas mobilis subsp. mobilis (strain ATCC 31821 / ZM4 / CP4).